A 235-amino-acid chain; its full sequence is Enolase-phosphatase E1 (235 aa).

It belongs to the HAD-like hydrolase superfamily. MasA/MtnC family. As to quaternary structure, monomer. It depends on Mg(2+) as a cofactor.

It catalyses the reaction 5-methylsulfanyl-2,3-dioxopentyl phosphate + H2O = 1,2-dihydroxy-5-(methylsulfanyl)pent-1-en-3-one + phosphate. Its pathway is amino-acid biosynthesis; L-methionine biosynthesis via salvage pathway; L-methionine from S-methyl-5-thio-alpha-D-ribose 1-phosphate: step 3/6. The protein operates within amino-acid biosynthesis; L-methionine biosynthesis via salvage pathway; L-methionine from S-methyl-5-thio-alpha-D-ribose 1-phosphate: step 4/6. Functionally, bifunctional enzyme that catalyzes the enolization of 2,3-diketo-5-methylthiopentyl-1-phosphate (DK-MTP-1-P) into the intermediate 2-hydroxy-3-keto-5-methylthiopentenyl-1-phosphate (HK-MTPenyl-1-P), which is then dephosphorylated to form the acireductone 1,2-dihydroxy-3-keto-5-methylthiopentene (DHK-MTPene). The sequence is that of Enolase-phosphatase E1 from Parvibaculum lavamentivorans (strain DS-1 / DSM 13023 / NCIMB 13966).